Consider the following 301-residue polypeptide: MRIAILSRNENLYSTMRLKQAGEERGHQIDVIDTLHCYMDITSNNPMIRYKGEELPQYDAVIPRIGASITFYGTAVVRQFEMMGTFCVNESVAISRSRDKLRSLQLLSRKGIGLPRTGFAHHPDNIQDVIKNVGGAPLVIKLLEGTQGIGVVLAETNKAAESVIEAFMGLKANIMVQEFIEEAKGADIRCFVVGNKVIAAMKRQAKEGEFRSNLHRGGSAQLVRLSKEERATAVNAAKVMGLNLCGVDILQSKNGPVVMEVNSSPGLEGIELATGKDVAGMIFDFIEKNAKPNSNRTRGKG.

The ATP-grasp domain occupies 104–287; sequence LQLLSRKGIG…VAGMIFDFIE (184 aa). ATP contacts are provided by residues lysine 141, 178–179, aspartate 187, and 211–213; these read EF and RSN. Mg(2+)-binding residues include aspartate 248, glutamate 260, and asparagine 262. The Mn(2+) site is built by aspartate 248, glutamate 260, and asparagine 262.

The protein belongs to the RimK family. The cofactor is Mg(2+). Mn(2+) serves as cofactor.

This is Probable alpha-L-glutamate ligase from Vibrio parahaemolyticus serotype O3:K6 (strain RIMD 2210633).